The primary structure comprises 106 residues: Large ribosomal subunit protein eL30 (106 aa).

The protein belongs to the eukaryotic ribosomal protein eL30 family.

The polypeptide is Large ribosomal subunit protein eL30 (Methanococcus maripaludis (strain C5 / ATCC BAA-1333)).